A 782-amino-acid polypeptide reads, in one-letter code: Translation initiation factor IF-2 (782 aa).

Residues 47–196 (DNAIDGTNKK…TPPKPKELPE (150 aa)) form a disordered region. Residues 53–65 (TNKKAEAPKKETT) are compositionally biased toward basic and acidic residues. Residues 66 to 81 (SNENGNSKGPNKPNMT) are compositionally biased toward polar residues. Residues 82-93 (NSNEKSNKPNKP) show a composition bias toward low complexity. The span at 115–129 (KPANTSNQTQSSGNK) shows a compositional bias: polar residues. A compositionally biased stretch (low complexity) spans 133 to 170 (GGQKRNNNNNSNRPGGGNPNRPGGNNRPNRGGNFNNKG). Residues 283 to 452 (ERPPVVTIMG…LLVSEVEELK (170 aa)) enclose the tr-type G domain. The G1 stretch occupies residues 292 to 299 (GHVDHGKT). GTP is bound at residue 292–299 (GHVDHGKT). A G2 region spans residues 317 to 321 (GITQH). The tract at residues 338 to 341 (DTPG) is G3. GTP contacts are provided by residues 338–342 (DTPGH) and 392–395 (NKID). Positions 392–395 (NKID) are G4. The segment at 428-430 (SAK) is G5.

It belongs to the TRAFAC class translation factor GTPase superfamily. Classic translation factor GTPase family. IF-2 subfamily.

It is found in the cytoplasm. Its function is as follows. One of the essential components for the initiation of protein synthesis. Protects formylmethionyl-tRNA from spontaneous hydrolysis and promotes its binding to the 30S ribosomal subunits. Also involved in the hydrolysis of GTP during the formation of the 70S ribosomal complex. This chain is Translation initiation factor IF-2, found in Listeria innocua serovar 6a (strain ATCC BAA-680 / CLIP 11262).